We begin with the raw amino-acid sequence, 357 residues long: Protein RecA (357 aa).

67 to 74 (GPESSGKT) is a binding site for ATP. The segment at 333–357 (NELTPATAGNSHDEDAFADEGNEEF) is disordered. A compositionally biased stretch (acidic residues) spans 348–357 (AFADEGNEEF).

It belongs to the RecA family.

The protein localises to the cytoplasm. Can catalyze the hydrolysis of ATP in the presence of single-stranded DNA, the ATP-dependent uptake of single-stranded DNA by duplex DNA, and the ATP-dependent hybridization of homologous single-stranded DNAs. It interacts with LexA causing its activation and leading to its autocatalytic cleavage. The polypeptide is Protein RecA (Pectobacterium carotovorum subsp. carotovorum (strain PC1)).